The sequence spans 286 residues: Deleted in azoospermia-like-B (286 aa).

Positions 33 to 114 constitute an RRM domain; it reads NTVFVGGIDI…PAIRKICTYV (82 aa). A DAZ domain is found at 155–180; sequence ACPYPSSPPMAIQQIPVGCQQPGYFQ.

It belongs to the RRM DAZ family. In terms of assembly, interacts with the C-terminus of pabp1 and with epabp. Prior to oocyte maturation, found in a complex with epabp and pum2 proteins and spdy1 mRNA; pum2 dissociates from the complex during maturation.

Its subcellular location is the cytoplasm. Functionally, RNA-binding protein that is required for primordial germ cell (PGC) differentiation and indirectly necessary for the migration of PGCs through the endoderm. May promote meiotic cell division during spermatogenesis. Shows a preference for G- and U-rich RNAs and probably binds the 3'-UTR of target mRNAs. Stimulates the initiation of translation of mRNAs through the recruitment of poly(A)-binding proteins (PABPs). In Xenopus laevis (African clawed frog), this protein is Deleted in azoospermia-like-B (dazl-b).